The primary structure comprises 425 residues: Phosphomethylpyrimidine synthase (425 aa).

Residues Met-94, Tyr-123, His-162, 184-186 (SRG), 225-228 (NGMR), and Glu-264 contribute to the substrate site. Position 268 (His-268) interacts with Zn(2+). Residue Tyr-291 coordinates substrate. His-332 serves as a coordination point for Zn(2+). Cys-407, Cys-410, and Cys-414 together coordinate [4Fe-4S] cluster.

Belongs to the ThiC family. [4Fe-4S] cluster serves as cofactor.

It catalyses the reaction 5-amino-1-(5-phospho-beta-D-ribosyl)imidazole + S-adenosyl-L-methionine = 4-amino-2-methyl-5-(phosphooxymethyl)pyrimidine + CO + 5'-deoxyadenosine + formate + L-methionine + 3 H(+). It participates in cofactor biosynthesis; thiamine diphosphate biosynthesis. In terms of biological role, catalyzes the synthesis of the hydroxymethylpyrimidine phosphate (HMP-P) moiety of thiamine from aminoimidazole ribotide (AIR) in a radical S-adenosyl-L-methionine (SAM)-dependent reaction. In Methanocorpusculum labreanum (strain ATCC 43576 / DSM 4855 / Z), this protein is Phosphomethylpyrimidine synthase.